The chain runs to 111 residues: Secreted RxLR effector protein 159 (111 aa).

Positions 1 to 21 are cleaved as a signal peptide; that stretch reads MRGAYYVAIAFLVAASSRTAA. Positions 50-71 match the RxLR-dEER motif; that stretch reads RVLRGSRDLKDKLAVYANDEQR. Residue Asn-81 is glycosylated (N-linked (GlcNAc...) asparagine).

The protein belongs to the RxLR effector family.

The protein localises to the secreted. It localises to the host nucleus. The protein resides in the host cytoplasm. In terms of biological role, secreted effector that completely suppresses the host cell death induced by cell death-inducing proteins. This is Secreted RxLR effector protein 159 from Plasmopara viticola (Downy mildew of grapevine).